The primary structure comprises 59 residues: Large ribosomal subunit protein uL30 (59 aa).

Belongs to the universal ribosomal protein uL30 family. As to quaternary structure, part of the 50S ribosomal subunit.

This Actinobacillus pleuropneumoniae serotype 7 (strain AP76) protein is Large ribosomal subunit protein uL30.